The sequence spans 620 residues: Chaperone protein HscA homolog (620 aa).

The protein belongs to the heat shock protein 70 family.

Chaperone involved in the maturation of iron-sulfur cluster-containing proteins. Has a low intrinsic ATPase activity which is markedly stimulated by HscB. The protein is Chaperone protein HscA homolog of Neisseria meningitidis serogroup B (strain ATCC BAA-335 / MC58).